The sequence spans 429 residues: 3-phosphoshikimate 1-carboxyvinyltransferase (429 aa).

Positions 20, 21, and 25 each coordinate 3-phosphoshikimate. A phosphoenolpyruvate-binding site is contributed by Lys-20. Residues Gly-89 and Arg-118 each coordinate phosphoenolpyruvate. 6 residues coordinate 3-phosphoshikimate: Ser-164, Ser-165, Gln-166, Ser-192, Asp-311, and Lys-338. Gln-166 serves as a coordination point for phosphoenolpyruvate. Asp-311 functions as the Proton acceptor in the catalytic mechanism. Arg-342 and Arg-384 together coordinate phosphoenolpyruvate.

Belongs to the EPSP synthase family. Monomer.

The protein localises to the cytoplasm. The enzyme catalyses 3-phosphoshikimate + phosphoenolpyruvate = 5-O-(1-carboxyvinyl)-3-phosphoshikimate + phosphate. It functions in the pathway metabolic intermediate biosynthesis; chorismate biosynthesis. Functionally, catalyzes the transfer of the enolpyruvyl moiety of phosphoenolpyruvate (PEP) to the 5-hydroxyl of shikimate-3-phosphate (S3P) to produce enolpyruvyl shikimate-3-phosphate and inorganic phosphate. The protein is 3-phosphoshikimate 1-carboxyvinyltransferase of Methanococcus maripaludis (strain DSM 14266 / JCM 13030 / NBRC 101832 / S2 / LL).